The following is a 260-amino-acid chain: Methyl-coenzyme M reductase I subunit gamma (260 aa).

Residue Arg-123 coordinates coenzyme M.

Belongs to the methyl-coenzyme M reductase gamma subunit family. In terms of assembly, MCR is a hexamer of two alpha, two beta, and two gamma chains, forming a dimer of heterotrimers. The cofactor is coenzyme F430.

It is found in the cytoplasm. It carries out the reaction coenzyme B + methyl-coenzyme M = methane + coenzyme M-coenzyme B heterodisulfide. It participates in one-carbon metabolism; methyl-coenzyme M reduction; methane from methyl-coenzyme M: step 1/1. Its function is as follows. Component of the methyl-coenzyme M reductase (MCR) I that catalyzes the reductive cleavage of methyl-coenzyme M (CoM-S-CH3 or 2-(methylthio)ethanesulfonate) using coenzyme B (CoB or 7-mercaptoheptanoylthreonine phosphate) as reductant which results in the production of methane and the mixed heterodisulfide of CoB and CoM (CoM-S-S-CoB). This is the final step in methanogenesis. The sequence is that of Methyl-coenzyme M reductase I subunit gamma (mcrG) from Methanocaldococcus jannaschii (strain ATCC 43067 / DSM 2661 / JAL-1 / JCM 10045 / NBRC 100440) (Methanococcus jannaschii).